We begin with the raw amino-acid sequence, 343 residues long: Selenide, water dikinase (343 aa).

The active site involves C15. Residues K18 and H46–D48 each bind ATP. Residue D49 participates in Mg(2+) binding. ATP is bound by residues D66, D89, and G137 to S139. D89 serves as a coordination point for Mg(2+). A Mg(2+)-binding site is contributed by D225.

Belongs to the selenophosphate synthase 1 family. Class I subfamily. Homodimer. Mg(2+) serves as cofactor.

The enzyme catalyses hydrogenselenide + ATP + H2O = selenophosphate + AMP + phosphate + 2 H(+). Functionally, synthesizes selenophosphate from selenide and ATP. The chain is Selenide, water dikinase from Sulfurimonas denitrificans (strain ATCC 33889 / DSM 1251) (Thiomicrospira denitrificans (strain ATCC 33889 / DSM 1251)).